A 565-amino-acid polypeptide reads, in one-letter code: Adenine deaminase (565 aa).

It belongs to the metallo-dependent hydrolases superfamily. Adenine deaminase family. The cofactor is Mn(2+).

The enzyme catalyses adenine + H2O + H(+) = hypoxanthine + NH4(+). This Cereibacter sphaeroides (strain KD131 / KCTC 12085) (Rhodobacter sphaeroides) protein is Adenine deaminase.